Reading from the N-terminus, the 421-residue chain is Nuclear envelope integral membrane protein 2 (421 aa).

Positions 1-22 (MLPRLWWLVLWLQPLATLPASA) are cleaved as a signal peptide. 6 consecutive transmembrane segments (helical) span residues 64–84 (YMWS…IVYI), 147–167 (NIVD…FLYA), 175–195 (VFYY…FVLL), 206–226 (TFGA…CQLM), 238–258 (MYIL…CYSH), and 281–301 (LVYT…VLLF).

It belongs to the NEMP family. In terms of tissue distribution, in the ovary, highly expressed in somatic cells.

The protein resides in the nucleus inner membrane. The chain is Nuclear envelope integral membrane protein 2 (Nemp2) from Mus musculus (Mouse).